The primary structure comprises 211 residues: Transcriptional regulatory protein RcsA (211 aa).

Residues 135 to 200 (SEVHPFTLSQ…VIYHVVRLTD (66 aa)) form the HTH luxR-type domain. The segment at residues 159-178 (TIQISDKMQIKAKTVSSHKG) is a DNA-binding region (H-T-H motif).

The protein belongs to the RcsA family.

Functionally, component of the Rcs signaling system, which controls transcription of numerous genes. Binds to DNA to regulate expression of genes. The sequence is that of Transcriptional regulatory protein RcsA from Erwinia amylovora (Fire blight bacteria).